The following is a 277-amino-acid chain: Release factor glutamine methyltransferase (277 aa).

S-adenosyl-L-methionine is bound by residues 119–123 (GTGTG), aspartate 142, and asparagine 184. 184 to 187 (NPPY) contacts substrate.

This sequence belongs to the protein N5-glutamine methyltransferase family. PrmC subfamily.

It catalyses the reaction L-glutaminyl-[peptide chain release factor] + S-adenosyl-L-methionine = N(5)-methyl-L-glutaminyl-[peptide chain release factor] + S-adenosyl-L-homocysteine + H(+). In terms of biological role, methylates the class 1 translation termination release factors RF1/PrfA and RF2/PrfB on the glutamine residue of the universally conserved GGQ motif. The chain is Release factor glutamine methyltransferase from Enterococcus faecalis (strain ATCC 700802 / V583).